The chain runs to 687 residues: MAHLIEAAPNPHQPFVVTAGVAVGAAMRELELPNKGPEAIVCVKDSEGTLRDLSFVPEQDSKFTPVPANTEDGRTVIRHSCTHVLAQAVQAEFPGTKLGIGPAIENGFYYDFDVAEPFTPEDLQKLEKRMKKIVKQGQKFERRIFASVAEAEEALKNEPYKLELIRDKGNVDPGSDEATEIGAGDLTGYYNVNPRTGEVDWYDLCRGPHVPTTKYIPAFALTRSSAAYWRGDQSLAGLQRIYGTAWESKEALEEYQLMMAEAEKRDHRRLGAELDLFSFPDEIGSGFPVFHPNGGIVRLEMEEHSRRRHINAGYSFVNTPHITKGDLFKKSGHLDFYADGMFPPMQLDGEVDEEGNVVKQAQDYYAKPMNCPMHNLIFASRGRSYRELPLRLFEFGTVYRYEKSGVIHGLTRARGFTQDDAHIYCTEDQLEQELTSVLDFIISLLRDYGLDDFYLELSTKDPNKFVGSDEIWEKSTSILQRVATKSGLELVPDPAGAAFYGPKISVQARDAIGRTWQMSTVQLDFNLPERFNLEYTSSDGSKKRPIMIHRALFGSIERFFGVLLEHYAGAFPAWLAPHQVIGIPVADSFSEHLEKVTGMLRDNGVRASVDTSDDRMQKKIRNHTTGKVPFMLLAGARDVEANAVSFRFLDGTQINGVPVDKAIGVITQWISSRNNKQPSEETVKKLV.

The region spanning 1 to 67 (MAHLIEAAPN…EQDSKFTPVP (67 aa)) is the TGS domain. The catalytic stretch occupies residues 266 to 572 (DHRRLGAELD…LLEHYAGAFP (307 aa)). 3 residues coordinate Zn(2+): cysteine 371, histidine 422, and histidine 549.

This sequence belongs to the class-II aminoacyl-tRNA synthetase family. Homodimer. It depends on Zn(2+) as a cofactor.

It is found in the cytoplasm. It carries out the reaction tRNA(Thr) + L-threonine + ATP = L-threonyl-tRNA(Thr) + AMP + diphosphate + H(+). Its function is as follows. Catalyzes the attachment of threonine to tRNA(Thr) in a two-step reaction: L-threonine is first activated by ATP to form Thr-AMP and then transferred to the acceptor end of tRNA(Thr). Also edits incorrectly charged L-seryl-tRNA(Thr). The sequence is that of Threonine--tRNA ligase from Corynebacterium diphtheriae (strain ATCC 700971 / NCTC 13129 / Biotype gravis).